Reading from the N-terminus, the 600-residue chain is Aspartate--tRNA(Asp/Asn) ligase (600 aa).

Glu187 is a binding site for L-aspartate. The aspartate stretch occupies residues Gln211 to Lys214. Arg233 and His463 together coordinate L-aspartate. Arg233–Glu235 lines the ATP pocket. Residue Glu497 coordinates ATP. L-aspartate is bound at residue Arg504. Position 549 to 552 (Gly549 to Arg552) interacts with ATP.

This sequence belongs to the class-II aminoacyl-tRNA synthetase family. Type 1 subfamily. In terms of assembly, homodimer.

The protein localises to the cytoplasm. It catalyses the reaction tRNA(Asx) + L-aspartate + ATP = L-aspartyl-tRNA(Asx) + AMP + diphosphate. Its function is as follows. Aspartyl-tRNA synthetase with relaxed tRNA specificity since it is able to aspartylate not only its cognate tRNA(Asp) but also tRNA(Asn). Reaction proceeds in two steps: L-aspartate is first activated by ATP to form Asp-AMP and then transferred to the acceptor end of tRNA(Asp/Asn). This chain is Aspartate--tRNA(Asp/Asn) ligase, found in Wolbachia pipientis wMel.